A 574-amino-acid chain; its full sequence is Membrane protein insertase YidC (574 aa).

A helical transmembrane segment spans residues 6 to 26 (VFLIFAWLMVAALLWMEWGKE). The segment at 65–85 (QAGAPGKVPATSTTTATPAAA) is disordered. Transmembrane regions (helical) follow at residues 350-370 (VIDY…FWVL), 376-396 (FLHN…LVLY), 447-467 (GGCL…WVLV), 491-511 (FILP…TPTP), and 525-545 (PLVF…YWVV).

The protein belongs to the OXA1/ALB3/YidC family. Type 1 subfamily. Interacts with the Sec translocase complex via SecD. Specifically interacts with transmembrane segments of nascent integral membrane proteins during membrane integration.

The protein localises to the cell inner membrane. Functionally, required for the insertion and/or proper folding and/or complex formation of integral membrane proteins into the membrane. Involved in integration of membrane proteins that insert both dependently and independently of the Sec translocase complex, as well as at least some lipoproteins. Aids folding of multispanning membrane proteins. This chain is Membrane protein insertase YidC, found in Xanthomonas oryzae pv. oryzae (strain PXO99A).